The sequence spans 1923 residues: Endoribonuclease Dicer (1923 aa).

One can recognise a Helicase ATP-binding domain in the interval 51 to 227 (LLEAALDHNT…ELEEKIQKLE (177 aa)). An ATP-binding site is contributed by 64–71 (LNTGSGKT). Positions 175-178 (DECH) match the DECH box motif. Residues 256 to 595 (DCGPFTDRSG…LRNKCSKSVD (340 aa)) are required for interaction with PRKRA and TARBP2. Residues 410–433 (VSWSDSEDDEEDEEIEEKEKPETN) form a disordered region. Residues serine 413 and serine 415 each carry the phosphoserine modification. The segment covering 414–425 (DSEDDEEDEEIE) has biased composition (acidic residues). The region spanning 433 to 602 (NFPSPFTNIL…SVDTGEADTE (170 aa)) is the Helicase C-terminal domain. The Dicer dsRNA-binding fold domain occupies 629-721 (AIGHVNRYCA…MPVGKETVKY (93 aa)). Residues 894 to 1041 (KFMEDIEKSE…LVPELCAIHP (148 aa)) enclose the PAZ domain. A phosphoserine mark is found at serine 1015 and serine 1160. Composition is skewed to polar residues over residues 1246 to 1255 (NANTSTSDGS) and 1277 to 1290 (SEQSPSPGYSSRTL). Residues 1246–1291 (NANTSTSDGSPVTAAVPGTTETGEAPPDRTASEQSPSPGYSSRTLG) form a disordered region. The RNase III 1 domain occupies 1276–1404 (ASEQSPSPGY…TEKWEKDEMT (129 aa)). Glutamate 1316, glutamate 1396, and glutamate 1399 together coordinate Mg(2+). Phosphoserine is present on residues serine 1461, serine 1469, and serine 1471. An RNase III 2 domain is found at 1667 to 1825 (FENFEKKINY…LAGAIYMDSG (159 aa)). The Mg(2+) site is built by glutamate 1706, aspartate 1811, and glutamate 1814. One can recognise a DRBM domain in the interval 1853–1915 (SPVRELLEME…ARRALRSLKA (63 aa)). Position 1869 is a phosphoserine (serine 1869).

Belongs to the helicase family. Dicer subfamily. Component of the RISC loading complex (RLC), or micro-RNA (miRNA) loading complex (miRLC), which is composed of DICER1, AGO2 and TARBP2; DICER1 and TARBP2 are required to process precursor miRNAs (pre-miRNAs) to mature miRNAs and then load them onto AGO2. Note that the trimeric RLC/miRLC is also referred to as RISC. Interacts with DHX9, AGO1, PIWIL1 and PRKRA. Interacts with AGO2, TARBP2, EIF6, MOV10 and RPL7A (60S ribosome subunit); they form a large RNA-induced silencing complex (RISC). Interacts with BCDIN3D. Interacts (via Dicer dsRNA-binding fold domain) with ALOX5 (via PLAT domain); this interaction enhances arachidonate 5-lipoxygenase activity and modifies the miRNA precursor processing activity of DICER1. Mg(2+) is required as a cofactor. The cofactor is Mn(2+).

The protein resides in the cytoplasm. The catalysed reaction is Endonucleolytic cleavage to 5'-phosphomonoester.. In terms of biological role, double-stranded RNA (dsRNA) endoribonuclease playing a central role in short dsRNA-mediated post-transcriptional gene silencing. Cleaves naturally occurring long dsRNAs and short hairpin pre-microRNAs (miRNA) into fragments of twenty-one to twenty-three nucleotides with 3' overhang of two nucleotides, producing respectively short interfering RNAs (siRNA) and mature microRNAs. SiRNAs and miRNAs serve as guide to direct the RNA-induced silencing complex (RISC) to complementary RNAs to degrade them or prevent their translation. Gene silencing mediated by siRNAs, also called RNA interference, controls the elimination of transcripts from mobile and repetitive DNA elements of the genome but also the degradation of exogenous RNA of viral origin for instance. The miRNA pathway on the other side is a mean to specifically regulate the expression of target genes. This chain is Endoribonuclease Dicer (DICER1), found in Bos taurus (Bovine).